We begin with the raw amino-acid sequence, 145 residues long: D-aminoacyl-tRNA deacylase (145 aa).

The Gly-cisPro motif, important for rejection of L-amino acids motif lies at 137 to 138 (GP).

It belongs to the DTD family. In terms of assembly, homodimer.

The protein resides in the cytoplasm. It catalyses the reaction glycyl-tRNA(Ala) + H2O = tRNA(Ala) + glycine + H(+). The enzyme catalyses a D-aminoacyl-tRNA + H2O = a tRNA + a D-alpha-amino acid + H(+). Functionally, an aminoacyl-tRNA editing enzyme that deacylates mischarged D-aminoacyl-tRNAs. Also deacylates mischarged glycyl-tRNA(Ala), protecting cells against glycine mischarging by AlaRS. Acts via tRNA-based rather than protein-based catalysis; rejects L-amino acids rather than detecting D-amino acids in the active site. By recycling D-aminoacyl-tRNA to D-amino acids and free tRNA molecules, this enzyme counteracts the toxicity associated with the formation of D-aminoacyl-tRNA entities in vivo and helps enforce protein L-homochirality. In Carboxydothermus hydrogenoformans (strain ATCC BAA-161 / DSM 6008 / Z-2901), this protein is D-aminoacyl-tRNA deacylase.